Here is a 433-residue protein sequence, read N- to C-terminus: Enolase (433 aa).

Gln-167 lines the (2R)-2-phosphoglycerate pocket. Glu-209 (proton donor) is an active-site residue. Mg(2+) is bound by residues Asp-246, Glu-287, and Asp-314. (2R)-2-phosphoglycerate is bound by residues Lys-339, Arg-368, Ser-369, and Lys-390. Lys-339 functions as the Proton acceptor in the catalytic mechanism.

Belongs to the enolase family. Mg(2+) serves as cofactor.

Its subcellular location is the cytoplasm. It localises to the secreted. The protein localises to the cell surface. It catalyses the reaction (2R)-2-phosphoglycerate = phosphoenolpyruvate + H2O. The protein operates within carbohydrate degradation; glycolysis; pyruvate from D-glyceraldehyde 3-phosphate: step 4/5. Its function is as follows. Catalyzes the reversible conversion of 2-phosphoglycerate (2-PG) into phosphoenolpyruvate (PEP). It is essential for the degradation of carbohydrates via glycolysis. This Prochlorococcus marinus (strain NATL2A) protein is Enolase.